A 299-amino-acid chain; its full sequence is Oxygen-dependent coproporphyrinogen-III oxidase (299 aa).

Serine 92 provides a ligand contact to substrate. A divalent metal cation is bound by residues histidine 96 and histidine 106. Residue histidine 106 is the Proton donor of the active site. Position 108 to 110 (108 to 110) interacts with substrate; that stretch reads NVR. A divalent metal cation contacts are provided by histidine 145 and histidine 175. The important for dimerization stretch occupies residues 240 to 275; that stretch reads YVEFNLVWDRGTLFGLQTGGRTESILMSMPPLVRWE. Substrate is bound at residue 258 to 260; it reads GGR.

The protein belongs to the aerobic coproporphyrinogen-III oxidase family. Homodimer. It depends on a divalent metal cation as a cofactor.

Its subcellular location is the cytoplasm. The catalysed reaction is coproporphyrinogen III + O2 + 2 H(+) = protoporphyrinogen IX + 2 CO2 + 2 H2O. It functions in the pathway porphyrin-containing compound metabolism; protoporphyrin-IX biosynthesis; protoporphyrinogen-IX from coproporphyrinogen-III (O2 route): step 1/1. Its function is as follows. Involved in the heme biosynthesis. Catalyzes the aerobic oxidative decarboxylation of propionate groups of rings A and B of coproporphyrinogen-III to yield the vinyl groups in protoporphyrinogen-IX. This Salmonella heidelberg (strain SL476) protein is Oxygen-dependent coproporphyrinogen-III oxidase.